The chain runs to 181 residues: Large ribosomal subunit protein uL6 (181 aa).

It belongs to the universal ribosomal protein uL6 family. As to quaternary structure, part of the 50S ribosomal subunit.

Functionally, this protein binds to the 23S rRNA, and is important in its secondary structure. It is located near the subunit interface in the base of the L7/L12 stalk, and near the tRNA binding site of the peptidyltransferase center. In Rhodopirellula baltica (strain DSM 10527 / NCIMB 13988 / SH1), this protein is Large ribosomal subunit protein uL6.